The following is a 147-amino-acid chain: Protein OPG060 (147 aa).

The protein belongs to the orthopoxvirus OPG058 family.

This Bos taurus (Bovine) protein is Protein OPG060 (OPG060).